Consider the following 493-residue polypeptide: Telomere-binding protein subunit alpha (493 aa).

The interval 1–30 is disordered; sequence MSSAKRSTSRVSKKKAAPAKDGAPKKREQS. Residues 7–17 show a composition bias toward basic residues; it reads STSRVSKKKAA.

Belongs to the telombin family. As to quaternary structure, heterodimer of an alpha and a beta subunit.

Its subcellular location is the nucleus. The protein localises to the chromosome. It localises to the telomere. Functionally, may function as protective capping of the single-stranded telomeric overhang. May also participate in telomere length regulation during DNA replication. This chain is Telomere-binding protein subunit alpha (STY56V), found in Stylonychia mytilus (Ciliate).